A 295-amino-acid polypeptide reads, in one-letter code: Polyisoprenoid diphosphate/phosphate phosphohydrolase PLPP6 (295 aa).

Disordered stretches follow at residues 1 to 39 and 61 to 90; these read MPSPRRSMEGRPLGVSASSSSSSPGSPAHGGGGGGSRFE and SESPVHRRGSFPLAAAGPSQSPAPPLPEED. Residues 1 to 132 are Cytoplasmic-facing; the sequence is MPSPRRSMEG…ESSSWGSVRP (132 aa). Residues 16–27 show a composition bias toward low complexity; it reads SASSSSSSPGSP. Ser26, Ser36, and Ser70 each carry phosphoserine. The chain crosses the membrane as a helical span at residues 133-153; that stretch reads LMKLLEISGHGIPWLLGTLYC. Residues 154-164 lie on the Lumenal side of the membrane; sequence LCRSDSWAGRE. The helical transmembrane segment at 165–185 threads the bilayer; that stretch reads VLMNLLFALLLDLLLVALIKG. A phosphatase sequence motif I region spans residues 184–192; that stretch reads KGLVRRRRP. At 186–228 the chain is on the cytoplasmic side; that stretch reads LVRRRRPAHNQMDMFVTLSVDKYSFPSGHATRAALMSRFILNH. A phosphatase sequence motif II region spans residues 211 to 214; sequence PSGH. His214 (proton donors) is an active-site residue. The chain crosses the membrane as a helical span at residues 229 to 249; the sequence is LVLAIPLRVLVVLWAFVLGLS. The tract at residues 249–260 is phosphatase sequence motif III; the sequence is SRVMLGRHNVTD. At 250-260 the chain is on the lumenal side; that stretch reads RVMLGRHNVTD. The active-site Nucleophile is the His256. A helical membrane pass occupies residues 261-281; the sequence is VAFGFFLGYMQYSIVDYCWLS. At 282–295 the chain is on the cytoplasmic side; that stretch reads PHNAPVLFLLWSQR.

The protein belongs to the PA-phosphatase related phosphoesterase family. In terms of processing, phosphorylation by PKC activates the phosphatase activity towards presqualene diphosphate. As to expression, widely expressed. Expressed in most organs, in particular gastrointestinal organs, spleen, placenta, kidney, thymus and brain.

It localises to the endoplasmic reticulum membrane. Its subcellular location is the nucleus envelope. The protein resides in the nucleus inner membrane. It carries out the reaction presqualene diphosphate + H2O = presqualene phosphate + phosphate + H(+). It catalyses the reaction presqualene phosphate + H2O = presqualene alcohol + phosphate. The catalysed reaction is (2E,6E)-farnesyl diphosphate + H2O = (2E,6E)-farnesyl phosphate + phosphate + H(+). The enzyme catalyses (2E,6E)-farnesyl phosphate + H2O = (2E,6E)-farnesol + phosphate. It carries out the reaction (2E,6E,10E)-geranylgeranyl diphosphate + H2O = (2E,6E,10E)-geranylgeranyl phosphate + phosphate + H(+). It catalyses the reaction (2E,6E,10E)-geranylgeranyl phosphate + H2O = (2E,6E,10E)-geranylgeraniol + phosphate. The catalysed reaction is (2E)-geranyl diphosphate + H2O = (2E)-geranyl phosphate + phosphate + H(+). The enzyme catalyses (2E)-geranyl phosphate + H2O = (2E)-geraniol + phosphate. It carries out the reaction 1,2-dihexadecanoyl-sn-glycero-3-phosphate + H2O = 1,2-dihexadecanoyl-sn-glycerol + phosphate. Inhibited by propranolol. Not inhibited by N-ethylmaleimide or bromoenolactome. Functionally, magnesium-independent polyisoprenoid diphosphatase that catalyzes the sequential dephosphorylation of presqualene, farnesyl, geranyl and geranylgeranyl diphosphates. Functions in the innate immune response through the dephosphorylation of presqualene diphosphate which acts as a potent inhibitor of the signaling pathways contributing to polymorphonuclear neutrophils activation. May regulate the biosynthesis of cholesterol and related sterols by dephosphorylating presqualene and farnesyl diphosphate, two key intermediates in this biosynthetic pathway. May also play a role in protein prenylation by acting on farnesyl diphosphate and its derivative geranylgeranyl diphosphate, two precursors for the addition of isoprenoid anchors to membrane proteins. Has a lower activity towards phosphatidic acid (PA), but through phosphatidic acid dephosphorylation may participate in the biosynthesis of phospholipids and triacylglycerols. May also act on ceramide-1-P, lysophosphatidic acid (LPA) and sphing-4-enine 1-phosphate/sphingosine-1-phosphate. The protein is Polyisoprenoid diphosphate/phosphate phosphohydrolase PLPP6 of Homo sapiens (Human).